The primary structure comprises 1687 residues: Muscle calcium channel subunit alpha-1 (1687 aa).

Residues 1–33 are disordered; sequence MDDAVCPTETDNVQNKQKATTPKRTQRRGGKQQ. Residues 1-61 lie on the Cytoplasmic side of the membrane; the sequence is MDDAVCPTET…IFCIKIVDSK (61 aa). Residues 9–23 are compositionally biased toward polar residues; that stretch reads ETDNVQNKQKATTPK. One copy of the I repeat lies at 48 to 330; that stretch reads NPLRIFCIKI…LILGVLSGEF (283 aa). A helical membrane pass occupies residues 62 to 80; sequence LFEYFILLTIFANCVALAV. Residues 81–99 are Extracellular-facing; the sequence is YTPYPSGDSNITNQMLEKI. N-linked (GlcNAc...) asparagine glycosylation is present at Asn-90. The helical transmembrane segment at 100-117 threads the bilayer; sequence EYIFLVIFTSECVMKIIA. Residues 118–130 lie on the Cytoplasmic side of the membrane; that stretch reads YGFVLHTGSYLRN. The chain crosses the membrane as a helical span at residues 131–145; sequence GWNFLDFFIVVIGMI. The Extracellular portion of the chain corresponds to 146–157; sequence STALSNLVKEGF. The helical transmembrane segment at 158 to 176 threads the bilayer; sequence DVKALRAFRVLRPLRLVSG. Residues 177-196 lie on the Cytoplasmic side of the membrane; it reads VPSLQVVLNSILKAMIPLLH. Residues 197–216 traverse the membrane as a helical segment; it reads IALLVLFVIIIYAIIGLELF. Residues 217–302 are Extracellular-facing; the sequence is SGKLHKTCRH…SIQDAMGSSW (86 aa). Glu-285 contributes to the Ca(2+) binding site. Residues 303 to 327 traverse the membrane as a helical segment; the sequence is EWIYFVSMVILGAFFVMNLILGVLS. Residues 328–434 are Cytoplasmic-facing; that stretch reads GEFSKERTKA…RACRKAVKSQ (107 aa). Residues 420-667 form an II repeat; that stretch reads NRRIRRACRK…VFLAIAVDNL (248 aa). The chain crosses the membrane as a helical span at residues 435–454; the sequence is AFYWLIILLVFLNTGVLATE. The Extracellular portion of the chain corresponds to 455–467; it reads HYRQPIWLDQFQE. Residues 468 to 487 traverse the membrane as a helical segment; the sequence is YTNIFFIALFTCEMILKMYS. The Cytoplasmic segment spans residues 488–496; it reads LGFQGYFVS. The helical transmembrane segment at 497-515 threads the bilayer; the sequence is LFNRFDCFVVIGSISEMVL. Topologically, residues 516–525 are extracellular; sequence TSSELMAPLG. The helical transmembrane segment at 526–544 threads the bilayer; it reads VSVLRCVRLLRVFKVTKYW. Over 545-563 the chain is Cytoplasmic; it reads HSLSNLVASLLNSIQSIAS. Residues 564-583 traverse the membrane as a helical segment; sequence LLLLLFLFIVIFGLLGMQVF. Residues 584–639 are Extracellular-facing; the sequence is GGRFTFKPEEEKPRSNFDSFYQSLLTVFQILTGEDWNVVMYDGIRAYGGVFSFGIV. Glu-617 contacts Ca(2+). The chain crosses the membrane as a helical span at residues 640–664; it reads ACIYYIILFICGNYILLNVFLAIAV. Residues 665-785 lie on the Cytoplasmic side of the membrane; the sequence is DNLADADSLS…TNRFRIFCHR (121 aa). An III repeat occupies 777–1059; the sequence is NRFRIFCHRL…IFVGFVIVTF (283 aa). Residues 786–809 traverse the membrane as a helical segment; that stretch reads LCNHSNFGNFILCCIMFSSAMLAA. At 810-826 the chain is on the extracellular side; the sequence is ENPLKADASRNIVLNKF. Residues 827 to 846 form a helical membrane-spanning segment; sequence DYFFTAVFTIELVLKLISYG. Over 847-854 the chain is Cytoplasmic; that stretch reads FVLHDGAF. Residues 855–877 form a helical membrane-spanning segment; that stretch reads CRSAFNLLDLLVVCVSLISIFFN. The Extracellular portion of the chain corresponds to 878–885; it reads SNAISVVK. The helical transmembrane segment at 886–900 threads the bilayer; the sequence is ILRVLRVLRPLRAIN. At 901–921 the chain is on the cytoplasmic side; that stretch reads RAKGLKHVVQCVIVAVKTIGN. Residues 922–941 form a helical membrane-spanning segment; it reads IVLVTCLLQFMFAVIGVQLF. The Extracellular portion of the chain corresponds to 942-1030; it reads KGKFFSCSDG…NGGPIYNFRP (89 aa). Residues 979–1068 are dihydropyridine binding; the sequence is REWKNNKFHF…FQNEGEQEYK (90 aa). Residue Glu-1005 coordinates Ca(2+). A helical transmembrane segment spans residues 1031-1055; that stretch reads IVAAYYIIYIIIIAFFMVNIFVGFV. The Cytoplasmic segment spans residues 1056–1110; it reads IVTFQNEGEQEYKNCELDKNQRNCIEFALKAKPVRRYIPKHSIQYKVWWFVTSSS. One copy of the IV repeat lies at 1096 to 1370; that stretch reads HSIQYKVWWF…LFVAVIMDNF (275 aa). A helical transmembrane segment spans residues 1111–1129; that stretch reads FEYSIFVLIMINTVTLAMK. Residues 1130–1143 are Extracellular-facing; sequence FYKQPEYYSEILDA. Residues 1144-1163 traverse the membrane as a helical segment; the sequence is LNMIFTAVFSLEFIFKLAAF. Residues 1164–1172 are Cytoplasmic-facing; that stretch reads RFKNYFGDA. Residues 1173–1191 form a helical membrane-spanning segment; it reads WNTFDFIIVLGSFIDIVYS. At 1192 to 1219 the chain is on the extracellular side; it reads EIKTKEQALATCDGQSCNKAKGGSTLIS. The chain crosses the membrane as a helical span at residues 1220–1238; the sequence is INFFRLFRVMRLVKLLSKG. Residues 1239-1257 are Cytoplasmic-facing; that stretch reads EGIRTLLWTFIKSFQALPY. A helical membrane pass occupies residues 1258–1277; that stretch reads VALLIVMLFFIYAVIGMQVF. Topologically, residues 1278-1343 are extracellular; sequence GKIMLEEGTS…AVNNCGSSIA (66 aa). The segment at 1327 to 1389 is dihydropyridine binding; the sequence is KCDPESDAVN…LGPHHLDEFI (63 aa). A phenylalkylamine binding region spans residues 1337-1378; it reads NCGSSIAFPYFISFYVLCSFLIINLFVAVIMDNFDYLTRDWS. The helical transmembrane segment at 1344–1362 threads the bilayer; that stretch reads FPYFISFYVLCSFLIINLF. Over 1363 to 1687 the chain is Cytoplasmic; it reads VAVIMDNFDY…PKSKDKDEEF (325 aa).

The protein belongs to the calcium channel alpha-1 subunit (TC 1.A.1.11) family. Predominantly expressed in the larval body wall musculature. In adults, highest expression in thorax followed by head and at a lower extent by abdomen.

The protein resides in the membrane. In terms of biological role, voltage-sensitive calcium channels (VSCC) mediate the entry of calcium ions into excitable cells and are also involved in a variety of calcium-dependent processes, including muscle contraction, hormone or neurotransmitter release, gene expression, cell motility, cell division and cell death. MDL-alpha1 encodes a dihydropyridine- and diltiazem-sensitive current in larval body wall muscle. The chain is Muscle calcium channel subunit alpha-1 from Musca domestica (House fly).